Reading from the N-terminus, the 261-residue chain is ATP synthase subunit a (261 aa).

Residues 1 to 14 (MSTLSFNNISTEVL) constitute a propeptide, removed in mature form. 7 consecutive transmembrane segments (helical) span residues 38 to 58 (ITNI…INLL), 96 to 116 (IYFP…LIGM), 126 to 146 (HFVV…ILGF), 153 to 173 (FFSL…LVLI), 191 to 211 (ANIL…YNIM), 214 to 234 (GIIF…FSGL), and 235 to 255 (ELGI…GYIK).

This sequence belongs to the ATPase A chain family. As to quaternary structure, F-type ATPases have 2 components, CF(1) - the catalytic core - and CF(0) - the membrane proton channel. CF(1) has five subunits: alpha(3), beta(3), gamma(1), delta(1), epsilon(1). CF(0) has three main subunits: a, b and c.

It is found in the mitochondrion inner membrane. In terms of biological role, mitochondrial membrane ATP synthase (F(1)F(0) ATP synthase or Complex V) produces ATP from ADP in the presence of a proton gradient across the membrane which is generated by electron transport complexes of the respiratory chain. F-type ATPases consist of two structural domains, F(1) - containing the extramembraneous catalytic core and F(0) - containing the membrane proton channel, linked together by a central stalk and a peripheral stalk. During catalysis, ATP synthesis in the catalytic domain of F(1) is coupled via a rotary mechanism of the central stalk subunits to proton translocation. Key component of the proton channel; it may play a direct role in the translocation of protons across the membrane. This chain is ATP synthase subunit a (atp-6), found in Neurospora crassa (strain ATCC 24698 / 74-OR23-1A / CBS 708.71 / DSM 1257 / FGSC 987).